Reading from the N-terminus, the 85-residue chain is ATP synthase subunit c (85 aa).

Helical transmembrane passes span 1-21 and 53-73; these read MLAW…ALVG and LLFA…VALI.

This sequence belongs to the ATPase C chain family. As to quaternary structure, F-type ATPases have 2 components, F(1) - the catalytic core - and F(0) - the membrane proton channel. F(1) has five subunits: alpha(3), beta(3), gamma(1), delta(1), epsilon(1). F(0) has three main subunits: a(1), b(2) and c(10-14). The alpha and beta chains form an alternating ring which encloses part of the gamma chain. F(1) is attached to F(0) by a central stalk formed by the gamma and epsilon chains, while a peripheral stalk is formed by the delta and b chains.

Its subcellular location is the cell inner membrane. In terms of biological role, f(1)F(0) ATP synthase produces ATP from ADP in the presence of a proton or sodium gradient. F-type ATPases consist of two structural domains, F(1) containing the extramembraneous catalytic core and F(0) containing the membrane proton channel, linked together by a central stalk and a peripheral stalk. During catalysis, ATP synthesis in the catalytic domain of F(1) is coupled via a rotary mechanism of the central stalk subunits to proton translocation. Functionally, key component of the F(0) channel; it plays a direct role in translocation across the membrane. A homomeric c-ring of between 10-14 subunits forms the central stalk rotor element with the F(1) delta and epsilon subunits. The sequence is that of ATP synthase subunit c from Dictyoglomus turgidum (strain DSM 6724 / Z-1310).